A 300-amino-acid polypeptide reads, in one-letter code: Protoheme IX farnesyltransferase (300 aa).

The next 8 membrane-spanning stretches (helical) occupy residues 24 to 44, 46 to 66, 94 to 114, 118 to 138, 146 to 166, 172 to 192, 224 to 244, and 278 to 298; these read VTQLAVFCAVIGMFLATPGMV, WHVLIGGTIGIWLLAGAAFAI, PQILLFSAVLGSAGAWTLYTF, LTMWLTIATFVGYAVVYTLLL, IVIGGASGAMPPALGWAAVTG, AWILVLIIFVWTPPHFWVLAL, VILFAVTLMPFISGMSGVVYL, and IVYLSLLFAALLVDHYARPLL.

Belongs to the UbiA prenyltransferase family. Protoheme IX farnesyltransferase subfamily.

It is found in the cell inner membrane. It carries out the reaction heme b + (2E,6E)-farnesyl diphosphate + H2O = Fe(II)-heme o + diphosphate. It participates in porphyrin-containing compound metabolism; heme O biosynthesis; heme O from protoheme: step 1/1. In terms of biological role, converts heme B (protoheme IX) to heme O by substitution of the vinyl group on carbon 2 of heme B porphyrin ring with a hydroxyethyl farnesyl side group. The sequence is that of Protoheme IX farnesyltransferase from Burkholderia ambifaria (strain MC40-6).